The following is a 350-amino-acid chain: Phenylalanine--tRNA ligase alpha subunit (350 aa).

Glutamate 257 provides a ligand contact to Mg(2+).

It belongs to the class-II aminoacyl-tRNA synthetase family. Phe-tRNA synthetase alpha subunit type 1 subfamily. Tetramer of two alpha and two beta subunits. The cofactor is Mg(2+).

The protein resides in the cytoplasm. It carries out the reaction tRNA(Phe) + L-phenylalanine + ATP = L-phenylalanyl-tRNA(Phe) + AMP + diphosphate + H(+). In Listeria monocytogenes serovar 1/2a (strain ATCC BAA-679 / EGD-e), this protein is Phenylalanine--tRNA ligase alpha subunit.